We begin with the raw amino-acid sequence, 396 residues long: Lipid-A-disaccharide synthase (396 aa).

It belongs to the LpxB family.

The catalysed reaction is a lipid X + a UDP-2-N,3-O-bis[(3R)-3-hydroxyacyl]-alpha-D-glucosamine = a lipid A disaccharide + UDP + H(+). The protein operates within bacterial outer membrane biogenesis; LPS lipid A biosynthesis. Condensation of UDP-2,3-diacylglucosamine and 2,3-diacylglucosamine-1-phosphate to form lipid A disaccharide, a precursor of lipid A, a phosphorylated glycolipid that anchors the lipopolysaccharide to the outer membrane of the cell. The polypeptide is Lipid-A-disaccharide synthase (Nitrobacter winogradskyi (strain ATCC 25391 / DSM 10237 / CIP 104748 / NCIMB 11846 / Nb-255)).